The sequence spans 771 residues: Solute carrier family 7 member 14 (771 aa).

The next 6 membrane-spanning stretches (helical) occupy residues L58–V78, A83–V103, A119–L141, Y187–V207, V216–I236, and W251–I271. N282 is a glycosylation site (N-linked (GlcNAc...) asparagine). The next 4 helical transmembrane spans lie at A291 to V311, F336 to P356, P384 to L404, and L407 to L427. S465, S468, S475, and S488 each carry phosphoserine. 4 consecutive transmembrane segments (helical) span residues V565 to F585, W596 to L616, M628 to L648, and W655 to W675. Residue N676 is glycosylated (N-linked (GlcNAc...) asparagine). The segment at S735 to E771 is disordered. Residues S745–K754 show a composition bias toward basic residues. 2 positions are modified to phosphoserine: S757 and S769.

This sequence belongs to the amino acid-polyamine-organocation (APC) superfamily. In terms of tissue distribution, expressed in retina, brain and spinal cord. In the retina, expressed in the inner nuclear layer and photoreceptor layer (at protein level). Expressed in liver, spleen, lung, kidney intestine and brain (at protein level).

The protein resides in the lysosome membrane. The enzyme catalyses 4-aminobutanoate(in) = 4-aminobutanoate(out). Its function is as follows. Imports 4-aminobutanoate (GABA) into lysosomes. May act as a GABA sensor that regulates mTORC2-dependent INS signaling and gluconeogenesis. The transport mechanism and substrate selectivity remain to be elucidated. This is Solute carrier family 7 member 14 from Mus musculus (Mouse).